We begin with the raw amino-acid sequence, 41 residues long: Chymotrypsin inhibitor (41 aa).

Inhibits chymotrypsin. The protein is Chymotrypsin inhibitor of Eisenia hortensis (European nightcrawler).